Consider the following 38-residue polypeptide: Photosystem II reaction center protein L (38 aa).

A helical transmembrane segment spans residues 17–37 (SLFWGLLLIFVLAVLFSSYFF).

Belongs to the PsbL family. As to quaternary structure, PSII is composed of 1 copy each of membrane proteins PsbA, PsbB, PsbC, PsbD, PsbE, PsbF, PsbH, PsbI, PsbJ, PsbK, PsbL, PsbM, PsbT, PsbX, PsbY, PsbZ, Psb30/Ycf12, at least 3 peripheral proteins of the oxygen-evolving complex and a large number of cofactors. It forms dimeric complexes.

The protein resides in the plastid. It localises to the chloroplast thylakoid membrane. One of the components of the core complex of photosystem II (PSII). PSII is a light-driven water:plastoquinone oxidoreductase that uses light energy to abstract electrons from H(2)O, generating O(2) and a proton gradient subsequently used for ATP formation. It consists of a core antenna complex that captures photons, and an electron transfer chain that converts photonic excitation into a charge separation. This subunit is found at the monomer-monomer interface and is required for correct PSII assembly and/or dimerization. The polypeptide is Photosystem II reaction center protein L (Porphyra purpurea (Red seaweed)).